Here is a 95-residue protein sequence, read N- to C-terminus: Beta-alanine degradation protein BauB (95 aa).

One can recognise a Cupin type-2 domain in the interval 23-90; that stretch reads WRFAPGAETG…NASAHEVVFV (68 aa).

In terms of biological role, involved in the degradation of beta-alanine. The protein is Beta-alanine degradation protein BauB (bauB) of Pseudomonas aeruginosa (strain ATCC 15692 / DSM 22644 / CIP 104116 / JCM 14847 / LMG 12228 / 1C / PRS 101 / PAO1).